The sequence spans 185 residues: MIEETLLEAEEKMEKAVVVAKEDFAAIRTGRAHPAMFNKIVADYYGALTPINQLASFSVPEPRMAVVTPFDKSALRNIEQAIRDSDLGVNPSNDGNIIRVVFPELTEERRKDYIKVAKTKGEDAKVSIRSVRRKAKDAIDKLIKDGEVGEDEGRRAEKELDDTTAKYVAQVDELLKHKEAELLEV.

This sequence belongs to the RRF family.

The protein localises to the cytoplasm. Its function is as follows. Responsible for the release of ribosomes from messenger RNA at the termination of protein biosynthesis. May increase the efficiency of translation by recycling ribosomes from one round of translation to another. This Streptomyces avermitilis (strain ATCC 31267 / DSM 46492 / JCM 5070 / NBRC 14893 / NCIMB 12804 / NRRL 8165 / MA-4680) protein is Ribosome-recycling factor.